The chain runs to 122 residues: UPF0145 protein TV0671 (122 aa).

The protein belongs to the UPF0145 family.

The polypeptide is UPF0145 protein TV0671 (Thermoplasma volcanium (strain ATCC 51530 / DSM 4299 / JCM 9571 / NBRC 15438 / GSS1)).